Consider the following 275-residue polypeptide: Large ribosomal subunit protein uL2c (275 aa).

The segment at 224–275 is disordered; sequence AMNPVDHPHGGGEGRTPIGRKKPVTPWGYSALGKKSRKRNRYSDASILRRRE.

Belongs to the universal ribosomal protein uL2 family. Part of the 50S ribosomal subunit.

Its subcellular location is the plastid. It is found in the chloroplast. The protein is Large ribosomal subunit protein uL2c (rpl2) of Picea abies (Norway spruce).